Consider the following 333-residue polypeptide: Acyl-CoA wax alcohol acyltransferase 2 (333 aa).

3 helical membrane passes run 15–35 (VFAV…VIAV), 38–58 (YLVV…WLAF), and 130–150 (IFPG…MPFL).

It belongs to the diacylglycerol acyltransferase family. As to quaternary structure, monomer. Highly expressed in skin, where it is primarily restricted to undifferentiated peripheral sebocytes. Also expressed at lower level in other tissues except pancreas.

The protein localises to the endoplasmic reticulum membrane. The enzyme catalyses a long chain fatty alcohol + a fatty acyl-CoA = a wax ester + CoA. The catalysed reaction is all-trans-retinol + an acyl-CoA = an all-trans-retinyl ester + CoA. It catalyses the reaction an acyl-CoA + a 1,2-diacyl-sn-glycerol = a triacyl-sn-glycerol + CoA. It carries out the reaction 11-cis-retinol + a fatty acyl-CoA = 11-cis-retinyl ester + CoA. The enzyme catalyses 9-cis-retinol + a fatty acyl-CoA = 9-cis-retinyl ester + CoA. The catalysed reaction is 13-cis-retinol + a fatty acyl-CoA = 13-cis-retinyl ester + CoA. It catalyses the reaction a 1-acylglycerol + an acyl-CoA = a 1,2-diacylglycerol + CoA. It carries out the reaction 1-O-alkylglycerol + an acyl-CoA = 1-O-alkyl-3-acylglycerol + CoA. The enzyme catalyses a 2-acylglycerol + an acyl-CoA = a 1,2-diacyl-sn-glycerol + CoA. The catalysed reaction is 2-(9Z-octadecenoyl)-glycerol + hexadecanoyl-CoA = 1-hexadecanoyl-2-(9Z-octadecenoyl)-sn-glycerol + CoA. It catalyses the reaction 1,2-di-(9Z-octadecenoyl)-sn-glycerol + hexadecanoyl-CoA = 1,2-di-(9Z)-octadecenoyl-3-hexadecanoyl-sn-glycerol + CoA. It carries out the reaction hexadecan-1-ol + hexadecanoyl-CoA = hexadecanyl hexadecanoate + CoA. The enzyme catalyses hexadecane-1,2-diol + hexadecanoyl-CoA = 2-hydroxyhexadecyl hexadecanoate + CoA. The catalysed reaction is 9-cis-retinol + hexadecanoyl-CoA = 9-cis-retinyl hexadecanoate + CoA. It catalyses the reaction all-trans-retinol + hexadecanoyl-CoA = all-trans-retinyl hexadecanoate + CoA. It carries out the reaction 1,2-di-(9Z-octadecenoyl)-sn-glycerol + (9Z)-octadecenoyl-CoA = 1,2,3-tri-(9Z-octadecenoyl)-glycerol + CoA. The enzyme catalyses hexadecan-1-ol + (9Z)-octadecenoyl-CoA = hexadecanyl (9Z)-octadecenoate + CoA. The catalysed reaction is (9Z)-hexadecen-1-ol + (9Z)-octadecenoyl-CoA = 1-O-(9Z)-hexadecenyl (9Z)-octadecenoate + CoA. It catalyses the reaction octadecan-1-ol + (9Z)-octadecenoyl-CoA = 1-O-octadecyl (9Z)-octadecenoate + CoA. It carries out the reaction (9Z)-octadecen-1-ol + (9Z)-octadecenoyl-CoA = 1-O-(9Z)-octadecenyl (9Z)-octadecenoate + CoA. The enzyme catalyses hexadecan-1-ol + (9Z)-hexadecenoyl-CoA = 1-O-hexadecyl (9Z)-hexadecenoate + CoA. The catalysed reaction is hexadecan-1-ol + octadecanoyl-CoA = hexadecanyl octadecanoate + CoA. It catalyses the reaction 11-cis-retinol + hexadecanoyl-CoA = 11-cis-retinyl hexadecanoate + CoA. It carries out the reaction 1-O-(9Z-octadecenyl)-glycerol + (9Z)-octadecenoyl-CoA = 1-O-(9Z-octadecyl)-3-(9Z-octadecenoyl)-glycerol + CoA. The enzyme catalyses 1-(9Z-octadecenoyl)-glycerol + (9Z)-octadecenoyl-CoA = 1,2-di-(9Z-octadecenoyl)-glycerol + CoA. The catalysed reaction is 11-cis-retinol + tetradecanoyl-CoA = 11-cis-retinyl tetradecanoate + CoA. It catalyses the reaction 9-cis-retinol + tetradecanoyl-CoA = 9-cis-retinyl tetradecanoate + CoA. It carries out the reaction 13-cis-retinol + tetradecanoyl-CoA = 13-cis-retinyl tetradecanoate + CoA. The enzyme catalyses all-trans-retinol + tetradecanoyl-CoA = all-trans-retinyl tetradecanoate + CoA. The catalysed reaction is tetradecan-1-ol + tetradecanoyl-CoA = tetradecanyl tetradecanoate + CoA. 11-cis retinoids act as allosteric modulators of acyl-CoA retinol O-fatty-acyltransferase (ARAT) activity by suppressing esterification of 9-cis, 13-cis, or all-trans retinols concurrently increasing the enzyme specificity toward 11-cis isomer. Functionally, acyltransferase that catalyzes the formation of ester bonds between fatty alcohols and fatty acyl-CoAs to form wax monoesters. Shows a preference for medium chain acyl-CoAs from C12 to C16 in length and fatty alcohols shorter than C20, as the acyl donors and acceptors, respectively. Also possesses acyl-CoA retinol acyltransferase (ARAT) activity that preferentially esterifies 11-cis-retinol, a chromophore precursor of bleached opsin pigments in cone cells. Shows higher catalytic efficiency toward 11-cis-retinol versus 9-cis-retinol, 13-cis-retinol, and all-trans-retinol substrates. The chain is Acyl-CoA wax alcohol acyltransferase 2 (AWAT2) from Homo sapiens (Human).